A 312-amino-acid chain; its full sequence is Porphobilinogen deaminase (312 aa).

C241 is modified (S-(dipyrrolylmethanemethyl)cysteine).

This sequence belongs to the HMBS family. In terms of assembly, monomer. It depends on dipyrromethane as a cofactor.

The catalysed reaction is 4 porphobilinogen + H2O = hydroxymethylbilane + 4 NH4(+). The protein operates within porphyrin-containing compound metabolism; protoporphyrin-IX biosynthesis; coproporphyrinogen-III from 5-aminolevulinate: step 2/4. Its pathway is porphyrin-containing compound metabolism; chlorophyll biosynthesis. Tetrapolymerization of the monopyrrole PBG into the hydroxymethylbilane pre-uroporphyrinogen in several discrete steps. This chain is Porphobilinogen deaminase, found in Prosthecochloris aestuarii (strain DSM 271 / SK 413).